Here is a 546-residue protein sequence, read N- to C-terminus: Pectinesterase 1 (546 aa).

Positions 1-39 (MANPQQPLLIKTHKQNPIISFKILSFVITLFVALFLVAP) are cleaved as a signal peptide. The propeptide occupies 40–229 (YQVEIKHSNL…RKLMESSGKD (190 aa)). Substrate is bound by residues Thr-308 and Gln-338. Cys-327 and Cys-354 are disulfide-bonded. Asp-361 functions as the Proton donor in the catalytic mechanism. Residue Asp-382 is the Nucleophile of the active site. Cys-395 and Cys-429 are oxidised to a cystine. 2 residues coordinate substrate: Arg-450 and Trp-452.

The protein in the N-terminal section; belongs to the PMEI family. In the C-terminal section; belongs to the pectinesterase family.

It is found in the secreted. Its subcellular location is the cell wall. It carries out the reaction [(1-&gt;4)-alpha-D-galacturonosyl methyl ester](n) + n H2O = [(1-&gt;4)-alpha-D-galacturonosyl](n) + n methanol + n H(+). It functions in the pathway glycan metabolism; pectin degradation; 2-dehydro-3-deoxy-D-gluconate from pectin: step 1/5. Its function is as follows. Pectinesterase may play a role in cell wall metabolism during fruit growth and development prior to ripening and may be required for preparing cell walls for softening by polygalacturonase during fruit ripening. The chain is Pectinesterase 1 (PME1.9) from Solanum lycopersicum (Tomato).